Reading from the N-terminus, the 81-residue chain is Cytotoxin I-like T-15 (81 aa).

The signal sequence occupies residues 1 to 21 (MKTLLLTLVVVTIVCLDLGYT). 4 disulfide bridges follow: cysteine 24–cysteine 42, cysteine 35–cysteine 59, cysteine 63–cysteine 74, and cysteine 75–cysteine 80.

The protein belongs to the three-finger toxin family. Short-chain subfamily. Type IA cytotoxin sub-subfamily. In terms of assembly, monomer in solution; Homodimer and oligomer in the presence of negatively charged lipids forming a pore with a size ranging between 20 and 30 Angstroms. In terms of tissue distribution, expressed by the venom gland.

The protein resides in the secreted. The protein localises to the target cell membrane. Functionally, shows cytolytic activity on many different cells by forming pore in lipid membranes. In vivo, increases heart rate or kills the animal by cardiac arrest. In addition, it binds to heparin with high affinity, interacts with Kv channel-interacting protein 1 (KCNIP1) in a calcium-independent manner, and binds to integrin alpha-V/beta-3 (ITGAV/ITGB3) with moderate affinity. The sequence is that of Cytotoxin I-like T-15 from Naja atra (Chinese cobra).